We begin with the raw amino-acid sequence, 147 residues long: Large ribosomal subunit protein bL9 (147 aa).

It belongs to the bacterial ribosomal protein bL9 family.

Its function is as follows. Binds to the 23S rRNA. The polypeptide is Large ribosomal subunit protein bL9 (Clostridium botulinum (strain ATCC 19397 / Type A)).